The chain runs to 308 residues: Aspartate carbamoyltransferase catalytic subunit (308 aa).

Carbamoyl phosphate-binding residues include Arg58 and Thr59. L-aspartate is bound at residue Lys86. Positions 108, 136, and 139 each coordinate carbamoyl phosphate. The L-aspartate site is built by Arg169 and Arg227. Carbamoyl phosphate is bound by residues Gly268 and Pro269.

The protein belongs to the aspartate/ornithine carbamoyltransferase superfamily. ATCase family. As to quaternary structure, heterododecamer (2C3:3R2) of six catalytic PyrB chains organized as two trimers (C3), and six regulatory PyrI chains organized as three dimers (R2).

It catalyses the reaction carbamoyl phosphate + L-aspartate = N-carbamoyl-L-aspartate + phosphate + H(+). The protein operates within pyrimidine metabolism; UMP biosynthesis via de novo pathway; (S)-dihydroorotate from bicarbonate: step 2/3. In terms of biological role, catalyzes the condensation of carbamoyl phosphate and aspartate to form carbamoyl aspartate and inorganic phosphate, the committed step in the de novo pyrimidine nucleotide biosynthesis pathway. In Chloroflexus aurantiacus (strain ATCC 29366 / DSM 635 / J-10-fl), this protein is Aspartate carbamoyltransferase catalytic subunit.